A 465-amino-acid chain; its full sequence is Cysteine--tRNA ligase (465 aa).

Cys-29 contacts Zn(2+). Residues 31-41 carry the 'HIGH' region motif; it reads PTVYNYIHIGN. Positions 209, 234, and 238 each coordinate Zn(2+). Residues 266-270 carry the 'KMSKS' region motif; sequence KMSKS. Lys-269 provides a ligand contact to ATP. Ser-270 is modified (phosphoserine).

The protein belongs to the class-I aminoacyl-tRNA synthetase family. As to quaternary structure, monomer. Requires Zn(2+) as cofactor.

It is found in the cytoplasm. It carries out the reaction tRNA(Cys) + L-cysteine + ATP = L-cysteinyl-tRNA(Cys) + AMP + diphosphate. This is Cysteine--tRNA ligase from Bacillus anthracis (strain A0248).